The chain runs to 343 residues: Uroporphyrinogen decarboxylase (343 aa).

Substrate contacts are provided by residues arginine 23 to arginine 27, aspartate 73, tyrosine 151, serine 206, and histidine 319.

It belongs to the uroporphyrinogen decarboxylase family. In terms of assembly, homodimer.

It localises to the cytoplasm. It carries out the reaction uroporphyrinogen III + 4 H(+) = coproporphyrinogen III + 4 CO2. It functions in the pathway porphyrin-containing compound metabolism; protoporphyrin-IX biosynthesis; coproporphyrinogen-III from 5-aminolevulinate: step 4/4. Functionally, catalyzes the decarboxylation of four acetate groups of uroporphyrinogen-III to yield coproporphyrinogen-III. The protein is Uroporphyrinogen decarboxylase of Sulfurimonas denitrificans (strain ATCC 33889 / DSM 1251) (Thiomicrospira denitrificans (strain ATCC 33889 / DSM 1251)).